Consider the following 358-residue polypeptide: Histidinol-phosphate aminotransferase (358 aa).

N6-(pyridoxal phosphate)lysine is present on lysine 218.

The protein belongs to the class-II pyridoxal-phosphate-dependent aminotransferase family. Histidinol-phosphate aminotransferase subfamily. In terms of assembly, homodimer. Pyridoxal 5'-phosphate serves as cofactor.

The enzyme catalyses L-histidinol phosphate + 2-oxoglutarate = 3-(imidazol-4-yl)-2-oxopropyl phosphate + L-glutamate. The protein operates within amino-acid biosynthesis; L-histidine biosynthesis; L-histidine from 5-phospho-alpha-D-ribose 1-diphosphate: step 7/9. This chain is Histidinol-phosphate aminotransferase, found in Dehalococcoides mccartyi (strain ATCC BAA-2100 / JCM 16839 / KCTC 5957 / BAV1).